The chain runs to 314 residues: 3'-5' exoribonuclease YhaM (314 aa).

Residues 163–279 (HVVSMLHLAK…LHYIDNLDAK (117 aa)) enclose the HD domain.

This sequence belongs to the YhaM family.

In terms of biological role, shows a 3'-5' exoribonuclease activity. This Bacillus pumilus (strain SAFR-032) protein is 3'-5' exoribonuclease YhaM.